The chain runs to 106 residues: uncharacterized protein (106 aa).

Residues 24 to 35 show a composition bias toward polar residues; that stretch reads ANSISSTSFYHK. Disordered regions lie at residues 24 to 49 and 65 to 87; these read ANSI…SCEE and LTAE…SSDE. Composition is skewed to low complexity over residues 36–46 and 74–85; these read SSNNNSHANAS and SLSASNQPASSS.

This is an uncharacterized protein from Arabidopsis thaliana (Mouse-ear cress).